We begin with the raw amino-acid sequence, 149 residues long: Low molecular weight protein-tyrosine-phosphatase Wzb (149 aa).

Residue cysteine 9 is the Nucleophile of the active site. The active site involves arginine 15. Aspartate 115 serves as the catalytic Proton donor.

The protein belongs to the low molecular weight phosphotyrosine protein phosphatase family.

It carries out the reaction O-phospho-L-tyrosyl-[protein] + H2O = L-tyrosyl-[protein] + phosphate. It participates in glycan metabolism; exopolysaccharide biosynthesis. Dephosphorylates Wzc. Required for the extracellular polysaccharide colanic acid synthesis. Probably involved in the export of colanic acid from the cell to medium. Involved in protection of cells against contact-dependent growth inhibition (CDI). The protein is Low molecular weight protein-tyrosine-phosphatase Wzb (wzb) of Salmonella typhi.